The following is a 1312-amino-acid chain: Probable histone-lysine N-methyltransferase lin-59 (1312 aa).

Composition is skewed to polar residues over residues 1–11 and 25–36; these read MHGAGEQQQRY and STSSHQYQQQGA. Disordered regions lie at residues 1-41, 54-81, 154-223, 312-435, and 524-556; these read MHGA…QMHQ, TTTSAAASTSSSGGSNSSGGSGGHRQQG, QPSG…KPVD, EESK…PPPV, and KDNIKKEVKEESTPPPTKLRGRLPSRRTREPSE. Low complexity predominate over residues 54–68; it reads TTTSAAASTSSSGGS. A compositionally biased stretch (gly residues) spans 69–78; it reads NSSGGSGGHR. Positions 160 to 176 are enriched in low complexity; sequence PMSSNAPATTSSATPDS. The segment covering 200 to 210 has biased composition (acidic residues); that stretch reads DHDDEEDDDGP. Basic and acidic residues predominate over residues 312–321; sequence EESKKKKDME. Over residues 344-367 the composition is skewed to polar residues; that stretch reads ATRSTNSPDVTTSNLPEEPSTSTM. Residues 371–382 are compositionally biased toward basic and acidic residues; it reads KENEDVEKVEGK. A compositionally biased stretch (basic residues) spans 383 to 394; sequence RRGRKPKKRRGF. Basic and acidic residues-rich tracts occupy residues 395 to 419 and 524 to 535; these read HKESFEDLESDAKKSKAEQHEDHLP and KDNIKKEVKEES. One can recognise an AWS domain in the interval 590–635; that stretch reads APSLTCGCTKGACTSDMDCLNRALRVQCSSDCSVPYCSNRRFWKED. Residues 638–750 enclose the SET domain; that stretch reads NKLCVSNGPR…PNAEITVDKS (113 aa). The tract at residues 913–934 is disordered; the sequence is DNAPRARALSTSCPSPVPSKRG. The PHD-type zinc-finger motif lies at 967–1027; that stretch reads AVRCICGALD…EYICDFCTNK (61 aa). The BAH domain occupies 1100–1223; that stretch reads NKYRFPKAAT…KTQRVFEKVP (124 aa). The tract at residues 1248–1295 is disordered; that stretch reads RDFRPYDPSNPSPKPPKTSSIPSTSSIDPPQSSSDGLPEVDTKKLSKR. Residues 1264–1281 show a composition bias toward low complexity; it reads KTSSIPSTSSIDPPQSSS.

Belongs to the class V-like SAM-binding methyltransferase superfamily. Histone-lysine methyltransferase family. SET2 subfamily. In terms of tissue distribution, widely expressed throughout embryonic development and into adulthood.

The protein resides in the nucleus. It carries out the reaction L-lysyl-[histone] + S-adenosyl-L-methionine = N(6)-methyl-L-lysyl-[histone] + S-adenosyl-L-homocysteine + H(+). Its function is as follows. Probable histone methyltransferase. Essential protein required to maintain expression of homeotic genes egl-5 and mab-5. May play an analogous role to the trithorax Group (trxG) proteins. TrxG proteins form multiprotein complexes that are required to maintain the transcriptionally active state of homeotic genes throughout development. May act via a modification of chromatin. The protein is Probable histone-lysine N-methyltransferase lin-59 (lin-59) of Caenorhabditis elegans.